Here is a 462-residue protein sequence, read N- to C-terminus: Fumarate hydratase class II (462 aa).

Residues 97-99, 127-130, 137-139, and threonine 185 each bind substrate; these read SGT, HPND, and SSN. Histidine 186 (proton donor/acceptor) is an active-site residue. Serine 316 is an active-site residue. Substrate contacts are provided by residues serine 317 and 322–324; that span reads KVN.

This sequence belongs to the class-II fumarase/aspartase family. Fumarase subfamily. Homotetramer.

The protein localises to the cytoplasm. It catalyses the reaction (S)-malate = fumarate + H2O. Its pathway is carbohydrate metabolism; tricarboxylic acid cycle; (S)-malate from fumarate: step 1/1. Its function is as follows. Involved in the TCA cycle. Catalyzes the stereospecific interconversion of fumarate to L-malate. The polypeptide is Fumarate hydratase class II (Halalkalibacterium halodurans (strain ATCC BAA-125 / DSM 18197 / FERM 7344 / JCM 9153 / C-125) (Bacillus halodurans)).